The sequence spans 188 residues: Accessory gene regulator protein B (188 aa).

The next 4 membrane-spanning stretches (helical) occupy residues 49-69 (LALL…FLTL), 104-126 (ISFQ…YAPA), 143-163 (IKSI…PPPY), and 166-186 (FVVY…SIKE).

It belongs to the AgrB family.

The protein resides in the cell membrane. Its function is as follows. Essential for the production of a quorum sensing system signal molecule, the autoinducing peptide (AIP). This quorum sensing system is responsible for the regulation of the expression of virulence factor genes. Involved in the proteolytic processing of AgrD, the precursor of AIP. This chain is Accessory gene regulator protein B, found in Staphylococcus intermedius.